The following is a 316-amino-acid chain: tRNA uridine(34) hydroxylase (316 aa).

The Rhodanese domain occupies alanine 136 to serine 230. Cysteine 190 functions as the Cysteine persulfide intermediate in the catalytic mechanism.

Belongs to the TrhO family.

It catalyses the reaction uridine(34) in tRNA + AH2 + O2 = 5-hydroxyuridine(34) in tRNA + A + H2O. Catalyzes oxygen-dependent 5-hydroxyuridine (ho5U) modification at position 34 in tRNAs. The sequence is that of tRNA uridine(34) hydroxylase from Brucella abortus (strain 2308).